A 504-amino-acid polypeptide reads, in one-letter code: Anaerobic nitric oxide reductase transcription regulator NorR (504 aa).

4-aspartylphosphate is present on D57. The 230-residue stretch at 187–416 (MIGLSPGMTQ…LEHAIHRAVV (230 aa)) folds into the Sigma-54 factor interaction domain. Residues 215 to 222 (GETGTGKE) and 278 to 287 (ADNGTLFLDE) contribute to the ATP site. A DNA-binding region (H-T-H motif) is located at residues 479–498 (WAACARMLETDVANLHRLAK).

Its pathway is nitrogen metabolism; nitric oxide reduction. Required for the expression of anaerobic nitric oxide (NO) reductase, acts as a transcriptional activator for at least the norVW operon. Activation also requires sigma-54. The sequence is that of Anaerobic nitric oxide reductase transcription regulator NorR from Escherichia coli O157:H7.